The chain runs to 395 residues: Ankyrin repeat domain-containing protein 65 (395 aa).

ANK repeat units lie at residues Q52–E81, A85–A114, A118–A147, A151–T180, R185–R212, L213–A241, V245–L274, H278–S307, L311–A340, and L344–L373.

The polypeptide is Ankyrin repeat domain-containing protein 65 (ANKRD65) (Bos taurus (Bovine)).